The sequence spans 413 residues: Putative acid phosphatase 11 (413 aa).

His35 serves as the catalytic Nucleophile. Asp315 functions as the Proton donor in the catalytic mechanism. A disulfide bridge links Cys381 with Cys387.

Belongs to the histidine acid phosphatase family.

It catalyses the reaction a phosphate monoester + H2O = an alcohol + phosphate. The chain is Putative acid phosphatase 11 (pho-11) from Caenorhabditis elegans.